Consider the following 92-residue polypeptide: RNA-binding protein Hfq (92 aa).

Residues 9–68 (DPFLNALRRERVPVSVYLVNGIKLQGTIESFDQFVVLLRNTVSQMVYKHAISTVVPARNV) form the Sm domain. The segment at 72 to 92 (PGGGYVQSNENNQAEDDDVEQ) is disordered.

It belongs to the Hfq family. In terms of assembly, homohexamer.

Functionally, RNA chaperone that binds small regulatory RNA (sRNAs) and mRNAs to facilitate mRNA translational regulation in response to envelope stress, environmental stress and changes in metabolite concentrations. Also binds with high specificity to tRNAs. The protein is RNA-binding protein Hfq of Xanthomonas campestris pv. campestris (strain 8004).